Consider the following 437-residue polypeptide: Lipid II isoglutaminyl synthase (glutamine-hydrolyzing) subunit MurT (437 aa).

The Zn(2+) site is built by cysteine 202, cysteine 205, cysteine 224, and cysteine 226. The active site involves aspartate 349.

It belongs to the MurCDEF family. MurT subfamily. As to quaternary structure, forms a heterodimer with GatD.

The catalysed reaction is beta-D-GlcNAc-(1-&gt;4)-Mur2Ac(oyl-L-Ala-gamma-D-Glu-L-Lys-D-Ala-D-Ala)-di-trans,octa-cis-undecaprenyl diphosphate + L-glutamine + ATP + H2O = beta-D-GlcNAc-(1-&gt;4)-Mur2Ac(oyl-L-Ala-D-isoglutaminyl-L-Lys-D-Ala-D-Ala)-di-trans,octa-cis-undecaprenyl diphosphate + L-glutamate + ADP + phosphate + H(+). It carries out the reaction beta-D-GlcNAc-(1-&gt;4)-Mur2Ac(oyl-L-Ala-gamma-D-Glu-L-Lys-D-Ala-D-Ala)-di-trans,octa-cis-undecaprenyl diphosphate + ATP = beta-D-GlcNAc-(1-&gt;4)-Mur2Ac(oyl-L-Ala-gamma-D-O-P-Glu-L-Lys-D-Ala-D-Ala)-di-trans,octa-cis-undecaprenyl diphosphate + ADP. The enzyme catalyses beta-D-GlcNAc-(1-&gt;4)-Mur2Ac(oyl-L-Ala-gamma-D-O-P-Glu-L-Lys-D-Ala-D-Ala)-di-trans,octa-cis-undecaprenyl diphosphate + NH4(+) = beta-D-GlcNAc-(1-&gt;4)-Mur2Ac(oyl-L-Ala-D-isoglutaminyl-L-Lys-D-Ala-D-Ala)-di-trans,octa-cis-undecaprenyl diphosphate + phosphate + H(+). It participates in cell wall biogenesis; peptidoglycan biosynthesis. Its function is as follows. The lipid II isoglutaminyl synthase complex catalyzes the formation of alpha-D-isoglutamine in the cell wall lipid II stem peptide. The MurT subunit catalyzes the ATP-dependent amidation of D-glutamate residue of lipid II, converting it to an isoglutamine residue. This is Lipid II isoglutaminyl synthase (glutamine-hydrolyzing) subunit MurT from Staphylococcus aureus (strain N315).